The primary structure comprises 292 residues: Homoserine kinase (292 aa).

ATP is bound at residue 81–91 (RPRSGLGSSGA).

Belongs to the GHMP kinase family. Homoserine kinase subfamily.

The protein localises to the cytoplasm. It carries out the reaction L-homoserine + ATP = O-phospho-L-homoserine + ADP + H(+). It functions in the pathway amino-acid biosynthesis; L-threonine biosynthesis; L-threonine from L-aspartate: step 4/5. In terms of biological role, catalyzes the ATP-dependent phosphorylation of L-homoserine to L-homoserine phosphate. In Thermococcus gammatolerans (strain DSM 15229 / JCM 11827 / EJ3), this protein is Homoserine kinase.